Consider the following 119-residue polypeptide: Large ribosomal subunit protein bL19 (119 aa).

It belongs to the bacterial ribosomal protein bL19 family.

Its function is as follows. This protein is located at the 30S-50S ribosomal subunit interface and may play a role in the structure and function of the aminoacyl-tRNA binding site. This Saccharopolyspora erythraea (strain ATCC 11635 / DSM 40517 / JCM 4748 / NBRC 13426 / NCIMB 8594 / NRRL 2338) protein is Large ribosomal subunit protein bL19.